Here is a 254-residue protein sequence, read N- to C-terminus: Serotonin N-acetyltransferase 1, chloroplastic (254 aa).

A chloroplast-targeting transit peptide spans 1 to 83 (MASAASASAS…NSTETVEPPS (83 aa)). The 136-residue stretch at 119–254 (VNVYDLQALC…IKGMFWYPRF (136 aa)) folds into the N-acetyltransferase domain.

The protein localises to the plastid. It is found in the chloroplast. Its subcellular location is the nucleus. The catalysed reaction is a 2-arylethylamine + acetyl-CoA = an N-acetyl-2-arylethylamine + CoA + H(+). The protein operates within aromatic compound metabolism; melatonin biosynthesis; melatonin from serotonin: step 1/2. Its function is as follows. Catalyzes the N-acetylation of serotonin into N-acetylserotonin, the penultimate step in the synthesis of melatonin. Catalyzes in vitro the N-acetylation of tryptamine to produce N-acetyltryptamine, 5-methoxytryptamine to produce melatonin and tyramine to produce N-acetyltyramine. Acetyltransferase required for geminivirus infection and systemic spread. This is Serotonin N-acetyltransferase 1, chloroplastic from Oryza sativa subsp. indica (Rice).